The sequence spans 510 residues: MIWHVQNENLILDSTRIFMKAFHLLLFDGSFIFPECILIFGLILLLMIDSTSDQKDIPWFYFISSTSLVMSITALLFRWREEPMIIFSGNFQTNNFNEIFQFLILLCSTLCIPLSVEYIECTEMAITEFLLFVLTATLGGMFLCGANDLITIFVAPECFSLCSYLLSGYTKKDVRSNEATMKYLLMGGASSSILVHGFSWLYGSSGGEIELQEIVNGLINTQMYNSPGILIALLFITVGIGFKLSLAPSHQWTPDVYEGSPTPVVAFLSVTSKVAASASATRIFDIPFYFSSNEWHLLLEILAILSMILGNLIAITQTSMKRMLAYSSIGQIGYVIIGIIVGDSNGGYASMITYMLFYISMNLGTFACIVLFGLRTGTDNIRDYAGLYTKDPFLALSLALCLLSLGGLPPLAGFFGKLHLFWCGWQAGLYFLVSIGLLTSVISIYYYLKIIKLLMTGRNQEITPHVRNYRRSPLRSNNSIELSMIVCVIASTIPGISMNPIIAIAQDTLF.

The next 13 membrane-spanning stretches (helical) occupy residues 24–44, 57–77, 99–119, 124–144, 149–169, 183–203, 227–247, 295–315, 323–343, 354–374, 395–415, 428–448, and 484–504; these read LLLFDGSFIFPECILIFGLIL, IPWFYFISSTSLVMSITALLF, IFQFLILLCSTLCIPLSVEYI, MAITEFLLFVLTATLGGMFLC, LITIFVAPECFSLCSYLLSGY, YLLMGGASSSILVHGFSWLYG, PGILIALLFITVGIGFKLSLA, WHLLLEILAILSMILGNLIAI, MLAYSSIGQIGYVIIGIIVGD, YMLFYISMNLGTFACIVLFGL, ALSLALCLLSLGGLPPLAGFF, GLYFLVSIGLLTSVISIYYYL, and MIVCVIASTIPGISMNPIIAI.

This sequence belongs to the complex I subunit 2 family. As to quaternary structure, NDH is composed of at least 16 different subunits, 5 of which are encoded in the nucleus.

It is found in the plastid. Its subcellular location is the chloroplast thylakoid membrane. It carries out the reaction a plastoquinone + NADH + (n+1) H(+)(in) = a plastoquinol + NAD(+) + n H(+)(out). The enzyme catalyses a plastoquinone + NADPH + (n+1) H(+)(in) = a plastoquinol + NADP(+) + n H(+)(out). In terms of biological role, NDH shuttles electrons from NAD(P)H:plastoquinone, via FMN and iron-sulfur (Fe-S) centers, to quinones in the photosynthetic chain and possibly in a chloroplast respiratory chain. The immediate electron acceptor for the enzyme in this species is believed to be plastoquinone. Couples the redox reaction to proton translocation, and thus conserves the redox energy in a proton gradient. This Eucalyptus globulus subsp. globulus (Tasmanian blue gum) protein is NAD(P)H-quinone oxidoreductase subunit 2 B, chloroplastic.